The following is a 1040-amino-acid chain: Multidrug resistance protein MdtB (1040 aa).

Helical transmembrane passes span 16-36 (FIMRPVATTLLMVAILLAGII), 347-367 (LMMAIALVVMIIYLFLRNIPA), 369-389 (IIPGVAVPLSLIGTFAVMVFL), 396-416 (LTLMALTIATGFVVDDAIVVI), 440-460 (IGFTIISLTFSLIAVLIPLLF), 472-492 (FAITLAVAILISAVVSLTLTP), 537-557 (WLTLSVALSTLLLSVLLWVFI), 863-883 (LGSTVWLIVAAVVAMYIVLGI), 888-908 (FIHPITILSTLPTAGVGALLA), 911-931 (IAGSELDVIAIIGIILLIGIV), 968-988 (ILMTTLAALLGALPLMLSTGV), and 998-1018 (IGMVGGLIVSQVLTLFTTPVI).

This sequence belongs to the resistance-nodulation-cell division (RND) (TC 2.A.6) family. MdtB subfamily. Part of a tripartite efflux system composed of MdtA, MdtB and MdtC. MdtB forms a heteromultimer with MdtC.

It is found in the cell inner membrane. This is Multidrug resistance protein MdtB from Shigella sonnei (strain Ss046).